The chain runs to 949 residues: Thrombospondin-4-B (949 aa).

Positions methionine 1–alanine 22 are cleaved as a signal peptide. The region spanning glutamate 23–aspartate 198 is the Laminin G-like domain. 21 disulfides stabilise this stretch: cysteine 276–cysteine 287, cysteine 281–cysteine 296, cysteine 299–cysteine 310, cysteine 316–cysteine 327, cysteine 321–cysteine 336, cysteine 339–cysteine 363, cysteine 369–cysteine 383, cysteine 377–cysteine 392, cysteine 395–cysteine 407, cysteine 413–cysteine 427, cysteine 421–cysteine 437, cysteine 439–cysteine 450, cysteine 466–cysteine 471, cysteine 476–cysteine 496, cysteine 512–cysteine 532, cysteine 535–cysteine 555, cysteine 571–cysteine 591, cysteine 594–cysteine 614, cysteine 632–cysteine 652, cysteine 672–cysteine 692, and cysteine 708–cysteine 929. Residues aspartate 312 to glutamate 349 enclose the EGF-like 1; calcium-binding domain. In terms of domain architecture, EGF-like 2; calcium-binding spans aspartate 365–lysine 408. The EGF-like 3 domain maps to proline 409–glycine 451. TSP type-3 repeat units follow at residues lysine 452 to glutamine 484, glutamate 485 to glutamine 520, glutamine 521 to glutamine 543, arginine 544 to glutamine 579, leucine 580 to glutamine 602, serine 603 to glutamine 640, leucine 641 to glutamine 680, and isoleucine 681 to leucine 716. The segment at aspartate 578 to asparagine 671 is disordered. Residues asparagine 601 and asparagine 637 are each glycosylated (N-linked (GlcNAc...) asparagine). Residues glycine 649–glycine 660 are compositionally biased toward acidic residues. Residues arginine 720–proline 934 enclose the TSP C-terminal domain. Asparagine 930 carries an N-linked (GlcNAc...) asparagine glycan.

The protein belongs to the thrombospondin family. Homotrimer; disulfide-linked.

The protein resides in the endoplasmic reticulum. It is found in the sarcoplasmic reticulum. The protein localises to the secreted. It localises to the extracellular space. Its subcellular location is the extracellular matrix. Its function is as follows. Adhesive glycoprotein that mediates cell-to-cell and cell-to-matrix interactions and may be involved in various processes including cellular proliferation, migration, adhesion and attachment. May play a role in ER stress response. This Danio rerio (Zebrafish) protein is Thrombospondin-4-B (thbs4b).